A 260-amino-acid polypeptide reads, in one-letter code: Protein phosphatase 1 regulatory subunit 35 (260 aa).

A disordered region spans residues 1-100; the sequence is MMGFGASALE…PLLVAGAPGD (100 aa). Phosphoserine occurs at positions 46 and 53. The span at 64–76 shows a compositional bias: basic residues; sequence RKGRRGGSRRGRQ.

This sequence belongs to the PPP1R35 family. In terms of assembly, interacts with PPP1CA; this interaction mediates the PPP1CA phosphatase activity inhibition. Interacts with RTTN; this interaction allows the mutual recruitment to the centriole.

The protein localises to the cytoplasm. It localises to the cytoskeleton. It is found in the microtubule organizing center. The protein resides in the centrosome. Its subcellular location is the centriole. Functionally, during centriole duplication, plays a role in the centriole elongation by promoting the recruitment of the microtubule-binding elongation machinery through its interaction with TTTN, leading to the centriole to centrosome conversion. In addition may play a role in the primary cilia assembly. The sequence is that of Protein phosphatase 1 regulatory subunit 35 from Mus musculus (Mouse).